The primary structure comprises 485 residues: Eukaryotic translation initiation factor 3 subunit E (485 aa).

The 173-residue stretch at 219–391 (NQPDGPDGIV…GEIHITKPVT (173 aa)) folds into the PCI domain. The segment at 444–485 (QGGGKSNKKGDYKKGDYKKGGDFKKGGDFKKGGDHKKRAWVK) is disordered. A compositionally biased stretch (basic and acidic residues) spans 451–475 (KKGDYKKGDYKKGGDFKKGGDFKKG). The span at 476–485 (GDHKKRAWVK) shows a compositional bias: basic residues.

This sequence belongs to the eIF-3 subunit E family. Component of the eukaryotic translation initiation factor 3 (eIF-3) complex.

It localises to the cytoplasm. Its function is as follows. Component of the eukaryotic translation initiation factor 3 (eIF-3) complex, which is involved in protein synthesis of a specialized repertoire of mRNAs and, together with other initiation factors, stimulates binding of mRNA and methionyl-tRNAi to the 40S ribosome. The eIF-3 complex specifically targets and initiates translation of a subset of mRNAs involved in cell proliferation. The polypeptide is Eukaryotic translation initiation factor 3 subunit E (Monosiga brevicollis (Choanoflagellate)).